A 502-amino-acid chain; its full sequence is Cytochrome P450 83A1 (502 aa).

Residues 1–21 (MEDIIIGVVALAAVLLFFLYQ) form a helical membrane-spanning segment. Cysteine 442 contributes to the heme binding site.

The protein belongs to the cytochrome P450 family. Requires heme as cofactor.

The protein localises to the endoplasmic reticulum membrane. It catalyses the reaction an (E)-omega-(methylsulfanyl)-alkanal oxime + glutathione + reduced [NADPH--hemoprotein reductase] + O2 = an S-[(1E)-1-(hydroxyimino)-omega-(methylsulfanyl)alkyl]-L-glutathione + oxidized [NADPH--hemoprotein reductase] + 2 H2O + H(+). Functionally, involved in the metabolism of aliphatic and aromatic oximes. Involved in the biosynthesis of both short-chain and long-chain aliphatic glucosinolates. This Arabidopsis thaliana (Mouse-ear cress) protein is Cytochrome P450 83A1 (CYP83A1).